The primary structure comprises 306 residues: tRNA pseudouridine synthase B (306 aa).

Residue D48 is the Nucleophile of the active site.

The protein belongs to the pseudouridine synthase TruB family. Type 1 subfamily.

The enzyme catalyses uridine(55) in tRNA = pseudouridine(55) in tRNA. Functionally, responsible for synthesis of pseudouridine from uracil-55 in the psi GC loop of transfer RNAs. This chain is tRNA pseudouridine synthase B, found in Chromobacterium violaceum (strain ATCC 12472 / DSM 30191 / JCM 1249 / CCUG 213 / NBRC 12614 / NCIMB 9131 / NCTC 9757 / MK).